Reading from the N-terminus, the 120-residue chain is Large ribosomal subunit protein uL18 (120 aa).

Positions 1–10 (MKLNRVESTR) are enriched in basic and acidic residues. The disordered stretch occupies residues 1 to 26 (MKLNRVESTRSRHRRVRRKVGGTGDR). Residues 11-20 (SRHRRVRRKV) are compositionally biased toward basic residues.

This sequence belongs to the universal ribosomal protein uL18 family. In terms of assembly, part of the 50S ribosomal subunit; part of the 5S rRNA/L5/L18/L25 subcomplex. Contacts the 5S and 23S rRNAs.

Functionally, this is one of the proteins that bind and probably mediate the attachment of the 5S RNA into the large ribosomal subunit, where it forms part of the central protuberance. The sequence is that of Large ribosomal subunit protein uL18 from Cyanothece sp. (strain PCC 7425 / ATCC 29141).